A 225-amino-acid polypeptide reads, in one-letter code: Putative tyrosine-protein phosphatase OCA1 (225 aa).

A compositionally biased stretch (acidic residues) spans 1–11 (MTDNCREDDDN). The interval 1–24 (MTDNCREDDDNLGTSGDNALSAPT) is disordered. The segment covering 12 to 24 (LGTSGDNALSAPT) has biased composition (polar residues). In terms of domain architecture, Tyrosine-protein phosphatase spans 42–196 (NFCPVERYLY…FDTKSVTIDK (155 aa)). C138 acts as the Phosphocysteine intermediate in catalysis.

This sequence belongs to the protein-tyrosine phosphatase family.

It localises to the cytoplasm. The catalysed reaction is O-phospho-L-tyrosyl-[protein] + H2O = L-tyrosyl-[protein] + phosphate. In terms of biological role, putative tyrosine-protein phosphatase required for protection against superoxide stress. The sequence is that of Putative tyrosine-protein phosphatase OCA1 (OCA1) from Eremothecium gossypii (strain ATCC 10895 / CBS 109.51 / FGSC 9923 / NRRL Y-1056) (Yeast).